The following is an 84-amino-acid chain: Cell division topological specificity factor (84 aa).

Belongs to the MinE family.

Functionally, prevents the cell division inhibition by proteins MinC and MinD at internal division sites while permitting inhibition at polar sites. This ensures cell division at the proper site by restricting the formation of a division septum at the midpoint of the long axis of the cell. The sequence is that of Cell division topological specificity factor from Pseudomonas putida (strain W619).